We begin with the raw amino-acid sequence, 434 residues long: UDP-N-acetylmuramoyl-L-alanyl-D-glutamate--2,6-diaminopimelate ligase (434 aa).

A UDP-N-acetyl-alpha-D-muramoyl-L-alanyl-D-glutamate-binding site is contributed by Ser-17. 68–74 (GTNGKTT) lines the ATP pocket. Residues 111–112 (TT), Ser-138, Gln-144, and Arg-146 contribute to the UDP-N-acetyl-alpha-D-muramoyl-L-alanyl-D-glutamate site. Lys-178 carries the post-translational modification N6-carboxylysine. Residues Arg-326, 350-353 (DNPR), Gly-401, and Glu-405 each bind meso-2,6-diaminopimelate. Residues 350 to 353 (DNPR) carry the Meso-diaminopimelate recognition motif motif.

The protein belongs to the MurCDEF family. MurE subfamily. Mg(2+) serves as cofactor. Post-translationally, carboxylation is probably crucial for Mg(2+) binding and, consequently, for the gamma-phosphate positioning of ATP.

Its subcellular location is the cytoplasm. It carries out the reaction UDP-N-acetyl-alpha-D-muramoyl-L-alanyl-D-glutamate + meso-2,6-diaminopimelate + ATP = UDP-N-acetyl-alpha-D-muramoyl-L-alanyl-gamma-D-glutamyl-meso-2,6-diaminopimelate + ADP + phosphate + H(+). It participates in cell wall biogenesis; peptidoglycan biosynthesis. Catalyzes the addition of meso-diaminopimelic acid to the nucleotide precursor UDP-N-acetylmuramoyl-L-alanyl-D-glutamate (UMAG) in the biosynthesis of bacterial cell-wall peptidoglycan. This is UDP-N-acetylmuramoyl-L-alanyl-D-glutamate--2,6-diaminopimelate ligase from Wolinella succinogenes (strain ATCC 29543 / DSM 1740 / CCUG 13145 / JCM 31913 / LMG 7466 / NCTC 11488 / FDC 602W) (Vibrio succinogenes).